Here is a 235-residue protein sequence, read N- to C-terminus: MLKLENLTYRYEHLMMRFDLHIQAGERIAILGPSGAGKSTLLNLIAGFQTAEKGSLWLNGENHTSTSPAQRPVSMLFQENNLFSHLTIEQNIGLGLHPGLRLNSTQKQTLQQIVSQVSLEDCLPRLPAQLSGGQRQRAALARCLVRQQPILLLDEPFSALDPALRNEMLVLLEQVCHERQLTLLMVSHNLDDAARIADRALLIVDGNIHYDGLTNTLVAGTVPEAAILGMKTDAI.

In terms of domain architecture, ABC transporter spans 2–230 (LKLENLTYRY…TVPEAAILGM (229 aa)). 32–39 (GPSGAGKS) contacts ATP.

It belongs to the ABC transporter superfamily. Thiamine importer (TC 3.A.1.19.1) family. As to quaternary structure, the complex is composed of two ATP-binding proteins (ThiQ), two transmembrane proteins (ThiP) and a solute-binding protein (ThiB).

It is found in the cell inner membrane. The catalysed reaction is thiamine(out) + ATP + H2O = thiamine(in) + ADP + phosphate + H(+). In terms of biological role, part of the ABC transporter complex ThiBPQ involved in thiamine import. Responsible for energy coupling to the transport system. This Photorhabdus laumondii subsp. laumondii (strain DSM 15139 / CIP 105565 / TT01) (Photorhabdus luminescens subsp. laumondii) protein is Thiamine import ATP-binding protein ThiQ.